We begin with the raw amino-acid sequence, 116 residues long: Ribosome-binding factor A (116 aa).

It belongs to the RbfA family. In terms of assembly, monomer. Binds 30S ribosomal subunits, but not 50S ribosomal subunits or 70S ribosomes.

Its subcellular location is the cytoplasm. One of several proteins that assist in the late maturation steps of the functional core of the 30S ribosomal subunit. Associates with free 30S ribosomal subunits (but not with 30S subunits that are part of 70S ribosomes or polysomes). Required for efficient processing of 16S rRNA. May interact with the 5'-terminal helix region of 16S rRNA. This Staphylococcus epidermidis (strain ATCC 35984 / DSM 28319 / BCRC 17069 / CCUG 31568 / BM 3577 / RP62A) protein is Ribosome-binding factor A.